Reading from the N-terminus, the 473-residue chain is Fumarate hydratase class II (473 aa).

Substrate contacts are provided by residues 104–106 (SGT), 128–131 (HPND), 138–140 (SSN), and T186. The active-site Proton donor/acceptor is H187. S318 is an active-site residue. Substrate-binding positions include S319 and 324 to 326 (KVN).

This sequence belongs to the class-II fumarase/aspartase family. Fumarase subfamily. In terms of assembly, homotetramer.

It localises to the cytoplasm. The catalysed reaction is (S)-malate = fumarate + H2O. It functions in the pathway carbohydrate metabolism; tricarboxylic acid cycle; (S)-malate from fumarate: step 1/1. Functionally, involved in the TCA cycle. Catalyzes the stereospecific interconversion of fumarate to L-malate. This is Fumarate hydratase class II from Corynebacterium glutamicum (strain ATCC 13032 / DSM 20300 / JCM 1318 / BCRC 11384 / CCUG 27702 / LMG 3730 / NBRC 12168 / NCIMB 10025 / NRRL B-2784 / 534).